The chain runs to 466 residues: ATP synthase subunit beta (466 aa).

Position 155-162 (155-162) interacts with ATP; it reads GGAGVGKT.

Belongs to the ATPase alpha/beta chains family. In terms of assembly, F-type ATPases have 2 components, CF(1) - the catalytic core - and CF(0) - the membrane proton channel. CF(1) has five subunits: alpha(3), beta(3), gamma(1), delta(1), epsilon(1). CF(0) has three main subunits: a(1), b(2) and c(9-12). The alpha and beta chains form an alternating ring which encloses part of the gamma chain. CF(1) is attached to CF(0) by a central stalk formed by the gamma and epsilon chains, while a peripheral stalk is formed by the delta and b chains.

The protein resides in the cell inner membrane. The catalysed reaction is ATP + H2O + 4 H(+)(in) = ADP + phosphate + 5 H(+)(out). Produces ATP from ADP in the presence of a proton gradient across the membrane. The catalytic sites are hosted primarily by the beta subunits. The sequence is that of ATP synthase subunit beta from Azoarcus sp. (strain BH72).